Consider the following 62-residue polypeptide: Photosystem II reaction center protein Z (62 aa).

Helical transmembrane passes span 8–28 (AVFA…VVFA) and 41–61 (FSGT…NSLI).

This sequence belongs to the PsbZ family. PSII is composed of 1 copy each of membrane proteins PsbA, PsbB, PsbC, PsbD, PsbE, PsbF, PsbH, PsbI, PsbJ, PsbK, PsbL, PsbM, PsbT, PsbY, PsbZ, Psb30/Ycf12, at least 3 peripheral proteins of the oxygen-evolving complex and a large number of cofactors. It forms dimeric complexes.

The protein localises to the plastid. It localises to the chloroplast thylakoid membrane. Its function is as follows. May control the interaction of photosystem II (PSII) cores with the light-harvesting antenna, regulates electron flow through the 2 photosystem reaction centers. PSII is a light-driven water plastoquinone oxidoreductase, using light energy to abstract electrons from H(2)O, generating a proton gradient subsequently used for ATP formation. The polypeptide is Photosystem II reaction center protein Z (Liriodendron tulipifera (Tuliptree)).